A 755-amino-acid chain; its full sequence is MSPTACVLVLALAALRATGQGQIPLGGDLAPQMLRELQETNAALQDVRELLRHRVKEITFLKNTVMECDACGMQPARTPGLSVRPVALCAPGSCFPGVVCTETATGARCGPCPPGYTGNGSHCTDVNECNAHPCFPRVRCINTSPGFHCEACPPGFSGPTHEGVGLTFAKTNKQVCTDINECETGQHNCVPNSVCVNTRGSFQCGPCQPGFVGDQRSGCQRRGQHFCPDGSPSPCHEKADCILERDGSRSCVCAVGWAGNGLLCGRDTDLDGFPDEKLRCSERQCRKDNCVTVPNSGQEDVDRDRIGDACDPDADGDGVPNEQDNCPLVRNPDQRNSDKDKWGDACDNCRSQKNDDQKDTDRDGQGDACDDDIDGDRIRNVADNCPRVPNFDQSDSDGDGVGDACDNCPQKDNPDQRDVDHDFVGDACDSDQDQDGDGHQDSRDNCPTVPNSAQQDSDHDGKGDACDDDDDNDGVPDSRDNCRLVPNPGQEDNDRDGVGDACQGDFDADKVIDKIDVCPENAEVTLTDFRAFQTVVLDPEGDAQIDPNWVVLNQGMEIVQTMNSDPGLAVGYTAFNGVDFEGTFHVNTATDDDYAGFIFGYQDSSSFYVVMWKQMEQTYWQANPFRAVAEPGIQLKAVKSSTGPGEQLRNALWHTGDTASQVRLLWKDPRNVGWKDKTSYRWFLQHRPQVGYIRVRFYEGPELVADSNVVLDTAMRGGRLGVFCFSQENIIWANLRYRCNDTIPEDYERHRLRRA.

A signal peptide spans 1 to 19; sequence MSPTACVLVLALAALRATG. A COMP N-terminal region spans residues 21-84; that stretch reads GQIPLGGDLA…PARTPGLSVR (64 aa). Positions 85–124 constitute an EGF-like 1 domain; the sequence is PVALCAPGSCFPGVVCTETATGARCGPCPPGYTGNGSHCT. 21 disulfides stabilise this stretch: Cys-89/Cys-100, Cys-94/Cys-109, Cys-112/Cys-123, Cys-129/Cys-140, Cys-134/Cys-149, Cys-152/Cys-176, Cys-182/Cys-195, Cys-189/Cys-204, Cys-207/Cys-219, Cys-227/Cys-241, Cys-235/Cys-251, Cys-253/Cys-264, Cys-280/Cys-285, Cys-290/Cys-310, Cys-326/Cys-346, Cys-349/Cys-369, Cys-385/Cys-405, Cys-408/Cys-428, Cys-446/Cys-466, Cys-482/Cys-502, and Cys-518/Cys-739. N-linked (GlcNAc...) asparagine glycosylation is present at Asn-119. Positions 125-177 constitute an EGF-like 2; calcium-binding domain; sequence DVNECNAHPCFPRVRCINTSPGFHCEACPPGFSGPTHEGVGLTFAKTNKQVCT. An EGF-like 3; calcium-binding domain is found at 178–220; the sequence is DINECETGQHNCVPNSVCVNTRGSFQCGPCQPGFVGDQRSGCQ. An EGF-like 4 domain is found at 223–265; that stretch reads GQHFCPDGSPSPCHEKADCILERDGSRSCVCAVGWAGNGLLCG. TSP type-3 repeat units lie at residues 266–298, 299–334, 335–357, 358–393, 394–416, 417–454, 455–490, and 491–526; these read RDTD…NSGQ, EDVD…NPDQ, RNSD…NDDQ, KDTD…NFDQ, SDSD…NPDQ, RDVD…NSAQ, QDSD…NPGQ, and EDND…EVTL. Residues 295 to 501 are disordered; the sequence is NSGQEDVDRD…DNDRDGVGDA (207 aa). Basic and acidic residues-rich tracts occupy residues 332–344 and 350–365; these read PDQR…KWGD and RSQK…RDGQ. Phosphoserine is present on Ser-394. 2 stretches are compositionally biased toward basic and acidic residues: residues 412-424 and 456-465; these read DNPD…HDFV and DSDHDGKGDA. The mediates cell survival and induction of the IAP family of survival proteins stretch occupies residues 525 to 755; it reads TLTDFRAFQT…DYERHRLRRA (231 aa). Residues 530–744 form the TSP C-terminal domain; the sequence is RAFQTVVLDP…LRYRCNDTIP (215 aa). Residue Asn-740 is glycosylated (N-linked (GlcNAc...) asparagine).

The protein belongs to the thrombospondin family. As to quaternary structure, pentamer; disulfide-linked. Exists in a more compact conformation in the presence of calcium and shows a more extended conformation in the absence of calcium. Interacts with ITGB3, ITGA5 and FN1. Binding to FN1 requires the presence of divalent cations (Ca(2+), Mg(2+) or Mn(2+)). The greatest amount of binding is seen in the presence of Mn(2+). Interacts with MATN1, MATN3, MATN4 and ACAN. Binds heparin, heparan sulfate and chondroitin sulfate. EDTA dimishes significantly its binding to ACAN and abolishes its binding to MATN3, MATN4 and chondroitin sulfate. Interacts with collagen I, II and IX, and interaction with these collagens is dependent on the presence of zinc ions. Interacts with ADAMTS12. Interacts with ITGA7. Ca(2+) is required as a cofactor. In terms of processing, proteolytically cleaved by metalloproteases ADAMTS4 and ADAMTS1 with ADAMTS4 showing more potent activity.

The protein localises to the secreted. The protein resides in the extracellular space. It is found in the extracellular matrix. In terms of biological role, plays a role in the structural integrity of cartilage via its interaction with other extracellular matrix proteins such as the collagens and fibronectin. Can mediate the interaction of chondrocytes with the cartilage extracellular matrix through interaction with cell surface integrin receptors. Could play a role in the pathogenesis of osteoarthritis. Potent suppressor of apoptosis in both primary chondrocytes and transformed cells. Suppresses apoptosis by blocking the activation of caspase-3 and by inducing the IAP family of survival proteins (BIRC3, BIRC2, BIRC5 and XIAP). Essential for maintaining a vascular smooth muscle cells (VSMCs) contractile/differentiated phenotype under physiological and pathological stimuli. Maintains this phenotype of VSMCs by interacting with ITGA7. The chain is Cartilage oligomeric matrix protein from Rattus norvegicus (Rat).